The chain runs to 65 residues: Small ribosomal subunit protein eS27 (65 aa).

Residues Cys21, Cys24, Cys40, and Cys43 each coordinate Zn(2+). The C4-type zinc-finger motif lies at 21 to 43 (CKDCGNVQVVFARPSSVVTCNIC).

This sequence belongs to the eukaryotic ribosomal protein eS27 family. As to quaternary structure, part of the 30S ribosomal subunit. Zn(2+) serves as cofactor.

This is Small ribosomal subunit protein eS27 from Thermoplasma volcanium (strain ATCC 51530 / DSM 4299 / JCM 9571 / NBRC 15438 / GSS1).